The following is a 207-amino-acid chain: Large ribosomal subunit protein uL3 (207 aa).

The segment at 113-148 is disordered; that stretch reads KGKGFQGPIKRHGQSRGPMAHGSRYHRRPGSMGPVA.

This sequence belongs to the universal ribosomal protein uL3 family. As to quaternary structure, part of the 50S ribosomal subunit. Forms a cluster with proteins L14 and L19.

One of the primary rRNA binding proteins, it binds directly near the 3'-end of the 23S rRNA, where it nucleates assembly of the 50S subunit. In Lactococcus lactis subsp. lactis (strain IL1403) (Streptococcus lactis), this protein is Large ribosomal subunit protein uL3.